The following is a 272-amino-acid chain: MNNSEQLIALKESETAFLKYFNKADYELVDFSVVEKLDWKQLNHEDLQQMGERNFWQHEHQIYALRNDFTDQLLRYYSMYPTAATKVAYTGLIIRNNEAAVQVGLENYAPSLANVQQSLKLFIQFIQQQLRDNVHFVVLGHYQLLDALLDKSLQTPDILSMIEERNLSGLVTYLSTEHPIVQILKENTQQQLNVLEHYIPNDHPALVELKIWERWLHKQGYKDIHLDITAQPPRSYYTGLFIQCHFAENESRVLTGGYYKGSIEGFGLGLTL.

This sequence belongs to the class-II aminoacyl-tRNA synthetase family. HisZ subfamily. Heteromultimer composed of HisG and HisZ subunits.

Its subcellular location is the cytoplasm. Its pathway is amino-acid biosynthesis; L-histidine biosynthesis; L-histidine from 5-phospho-alpha-D-ribose 1-diphosphate: step 1/9. Functionally, required for the first step of histidine biosynthesis. May allow the feedback regulation of ATP phosphoribosyltransferase activity by histidine. This Staphylococcus aureus (strain USA300) protein is ATP phosphoribosyltransferase regulatory subunit.